We begin with the raw amino-acid sequence, 1039 residues long: Error-prone DNA polymerase (1039 aa).

It belongs to the DNA polymerase type-C family. DnaE2 subfamily.

The protein localises to the cytoplasm. It catalyses the reaction DNA(n) + a 2'-deoxyribonucleoside 5'-triphosphate = DNA(n+1) + diphosphate. Its function is as follows. DNA polymerase involved in damage-induced mutagenesis and translesion synthesis (TLS). It is not the major replicative DNA polymerase. This chain is Error-prone DNA polymerase, found in Idiomarina loihiensis (strain ATCC BAA-735 / DSM 15497 / L2-TR).